We begin with the raw amino-acid sequence, 360 residues long: UDP-N-acetylglucosamine--N-acetylmuramyl-(pentapeptide) pyrophosphoryl-undecaprenol N-acetylglucosamine transferase (360 aa).

UDP-N-acetyl-alpha-D-glucosamine-binding residues include S198 and Q289.

It belongs to the glycosyltransferase 28 family. MurG subfamily.

Its subcellular location is the cell membrane. It carries out the reaction Mur2Ac(oyl-L-Ala-gamma-D-Glu-L-Lys-D-Ala-D-Ala)-di-trans,octa-cis-undecaprenyl diphosphate + UDP-N-acetyl-alpha-D-glucosamine = beta-D-GlcNAc-(1-&gt;4)-Mur2Ac(oyl-L-Ala-gamma-D-Glu-L-Lys-D-Ala-D-Ala)-di-trans,octa-cis-undecaprenyl diphosphate + UDP + H(+). The protein operates within cell wall biogenesis; peptidoglycan biosynthesis. Functionally, cell wall formation. Catalyzes the transfer of a GlcNAc subunit on undecaprenyl-pyrophosphoryl-MurNAc-pentapeptide (lipid intermediate I) to form undecaprenyl-pyrophosphoryl-MurNAc-(pentapeptide)GlcNAc (lipid intermediate II). This is UDP-N-acetylglucosamine--N-acetylmuramyl-(pentapeptide) pyrophosphoryl-undecaprenol N-acetylglucosamine transferase from Streptococcus pyogenes serotype M4 (strain MGAS10750).